Here is a 112-residue protein sequence, read N- to C-terminus: Putative pterin-4-alpha-carbinolamine dehydratase (112 aa).

It belongs to the pterin-4-alpha-carbinolamine dehydratase family.

It carries out the reaction (4aS,6R)-4a-hydroxy-L-erythro-5,6,7,8-tetrahydrobiopterin = (6R)-L-erythro-6,7-dihydrobiopterin + H2O. The protein is Putative pterin-4-alpha-carbinolamine dehydratase of Shewanella baltica (strain OS155 / ATCC BAA-1091).